Here is a 698-residue protein sequence, read N- to C-terminus: Elongation factor G (698 aa).

The tr-type G domain occupies 11-291 (THFRNIGIAA…AVVDYLPSPL (281 aa)). GTP is bound by residues 20 to 27 (AHIDAGKT), 90 to 94 (DTPGH), and 144 to 147 (NKMD).

The protein belongs to the TRAFAC class translation factor GTPase superfamily. Classic translation factor GTPase family. EF-G/EF-2 subfamily.

Its subcellular location is the cytoplasm. Its function is as follows. Catalyzes the GTP-dependent ribosomal translocation step during translation elongation. During this step, the ribosome changes from the pre-translocational (PRE) to the post-translocational (POST) state as the newly formed A-site-bound peptidyl-tRNA and P-site-bound deacylated tRNA move to the P and E sites, respectively. Catalyzes the coordinated movement of the two tRNA molecules, the mRNA and conformational changes in the ribosome. This Deinococcus radiodurans (strain ATCC 13939 / DSM 20539 / JCM 16871 / CCUG 27074 / LMG 4051 / NBRC 15346 / NCIMB 9279 / VKM B-1422 / R1) protein is Elongation factor G.